We begin with the raw amino-acid sequence, 479 residues long: UDP-glycosyltransferase 84A3 (479 aa).

The active-site Proton acceptor is the H19. H19 is a binding site for an anthocyanidin. Positions 346, 361, 364, 365, 366, and 369 each coordinate UDP-alpha-D-glucose. Position 384 (G384) interacts with an anthocyanidin. UDP-alpha-D-glucose contacts are provided by D385 and Q386.

It belongs to the UDP-glycosyltransferase family.

It carries out the reaction (E)-4-coumarate + UDP-alpha-D-glucose = 4-O-(beta-D-glucosyl)-trans-4-coumarate + UDP + H(+). It catalyses the reaction (E)-ferulate + UDP-alpha-D-glucose = 1-O-[(E)-feruloyl]-beta-D-glucose + UDP. The enzyme catalyses (E)-caffeate + UDP-alpha-D-glucose = 1-O-[(E)-caffeoyl]-beta-D-glucose + UDP. The catalysed reaction is (E)-sinapate + UDP-alpha-D-glucose = 1-O-(trans-sinapoyl)-beta-D-glucose + UDP. It carries out the reaction (E)-cinnamate + UDP-alpha-D-glucose = 1-O-(trans-cinnamoyl)-beta-D-glucose + UDP. UDP-glucosyltransferase that forms glucose esters with phenylpropanoids. Glucosylates 4-coumarate, ferulate, caffeate, sinapate and cinnamate. The protein is UDP-glycosyltransferase 84A3 of Arabidopsis thaliana (Mouse-ear cress).